We begin with the raw amino-acid sequence, 397 residues long: Elongation factor Tu (397 aa).

The region spanning 10–206 is the tr-type G domain; that stretch reads KPHVNIGTIG…AIDSYIPTPE (197 aa). A G1 region spans residues 19 to 26; sequence GHVDHGKT. Position 19 to 26 (19 to 26) interacts with GTP; it reads GHVDHGKT. Thr26 contacts Mg(2+). The segment at 60–64 is G2; it reads GITIN. The tract at residues 81-84 is G3; that stretch reads DCPG. GTP is bound by residues 81-85 and 136-139; these read DCPGH and NKAD. The segment at 136–139 is G4; the sequence is NKAD. Positions 174 to 176 are G5; the sequence is SAL.

The protein belongs to the TRAFAC class translation factor GTPase superfamily. Classic translation factor GTPase family. EF-Tu/EF-1A subfamily. Monomer.

It localises to the cytoplasm. It catalyses the reaction GTP + H2O = GDP + phosphate + H(+). Its function is as follows. GTP hydrolase that promotes the GTP-dependent binding of aminoacyl-tRNA to the A-site of ribosomes during protein biosynthesis. The polypeptide is Elongation factor Tu (Clostridium botulinum (strain Loch Maree / Type A3)).